Consider the following 156-residue polypeptide: Small ribosomal subunit protein bS6 (156 aa).

The segment at 95–156 (AITETSPLAK…DRDEQSEDSE (62 aa)) is disordered. A compositionally biased stretch (basic and acidic residues) spans 117 to 126 (RSGRDRDESG).

The protein belongs to the bacterial ribosomal protein bS6 family.

In terms of biological role, binds together with bS18 to 16S ribosomal RNA. The sequence is that of Small ribosomal subunit protein bS6 from Nitrosococcus oceani (strain ATCC 19707 / BCRC 17464 / JCM 30415 / NCIMB 11848 / C-107).